A 388-amino-acid polypeptide reads, in one-letter code: Succinate--CoA ligase [ADP-forming] subunit beta (388 aa).

An ATP-grasp domain is found at 9 to 244; the sequence is KQLFAEYGLP…PSQDDAREAH (236 aa). Residues Lys-46, 53 to 55, Glu-99, Thr-102, and Glu-107 each bind ATP; that span reads GRG. Mg(2+) is bound by residues Asn-199 and Asp-213. Substrate-binding positions include Asn-264 and 321 to 323; that span reads GIV.

The protein belongs to the succinate/malate CoA ligase beta subunit family. Heterotetramer of two alpha and two beta subunits. Mg(2+) is required as a cofactor.

It catalyses the reaction succinate + ATP + CoA = succinyl-CoA + ADP + phosphate. It carries out the reaction GTP + succinate + CoA = succinyl-CoA + GDP + phosphate. It functions in the pathway carbohydrate metabolism; tricarboxylic acid cycle; succinate from succinyl-CoA (ligase route): step 1/1. In terms of biological role, succinyl-CoA synthetase functions in the citric acid cycle (TCA), coupling the hydrolysis of succinyl-CoA to the synthesis of either ATP or GTP and thus represents the only step of substrate-level phosphorylation in the TCA. The beta subunit provides nucleotide specificity of the enzyme and binds the substrate succinate, while the binding sites for coenzyme A and phosphate are found in the alpha subunit. This is Succinate--CoA ligase [ADP-forming] subunit beta from Pseudomonas paraeruginosa (strain DSM 24068 / PA7) (Pseudomonas aeruginosa (strain PA7)).